We begin with the raw amino-acid sequence, 120 residues long: Vanadium-binding protein 2 (120 aa).

The signal sequence occupies residues 1–20; the sequence is MSKVIFALVLVVVLVACINA. Positions 21-29 are excised as a propeptide; that stretch reads TYVEFEEAY. Intrachain disulfides connect C34-C88, C38-C84, C42-C81, C48-C74, C52-C69, C56-C65, C92-C119, C97-C114, and C101-C111.

In terms of assembly, interacts with VIP1. Expressed in vanadocytes.

Its subcellular location is the cytoplasm. Functionally, acts as a vanadium reductase which may form an electron transfer cascade in conjunction with NADPH and glutathione through thiol disulfide exchange reactions. Partial cleavage of its disulfide bonds results in the reduction of V(5+) to V(4+). Binds up to 24 V(4+) ions per protein at pH 7.5. Also binds Fe(3+) and Cu(2+) and, to a lesser extent, Co(2+), Zn(2+) and Ni(2+). The polypeptide is Vanadium-binding protein 2 (Ascidia sydneiensis samea (Vanadium-rich ascidian)).